We begin with the raw amino-acid sequence, 155 residues long: MYPAHLLVLLAVCVSLLGASAISPRPLNLIQFSQLIQCANKGKRPTLHYMDYGCYCGKGGSGTPVDALDRCCKTHDDCYGQAGKKGCIPFVTLYNFGCFPGAPQCGKGNTCQRFVCACDLKAALCFAKSPYNNNNYNIDTKKKCQTLIYARLQTQ.

A signal peptide spans M1 to A21. Positions I22–L27 are excised as a propeptide. 7 disulfides stabilise this stretch: C38-C98, C54-C144, C56-C72, C71-C125, C78-C118, C87-C111, and C105-C116. Residues Y55, G57, and G59 each coordinate Ca(2+). Residue H75 is part of the active site. D76 contributes to the Ca(2+) binding site. D119 is a catalytic residue.

The protein belongs to the phospholipase A2 family. Group I subfamily. D49 sub-subfamily. Requires Ca(2+) as cofactor. Expressed by the venom gland.

The protein localises to the secreted. The enzyme catalyses a 1,2-diacyl-sn-glycero-3-phosphocholine + H2O = a 1-acyl-sn-glycero-3-phosphocholine + a fatty acid + H(+). Snake venom phospholipase A2 (PLA2) that inhibits neuromuscular transmission by blocking acetylcholine release from the nerve termini. PLA2 catalyzes the calcium-dependent hydrolysis of the 2-acyl groups in 3-sn-phosphoglycerides. This chain is Basic phospholipase A2 PC9, found in Laticauda colubrina (Yellow-lipped sea krait).